Here is a 94-residue protein sequence, read N- to C-terminus: Co-chaperonin GroES (94 aa).

Belongs to the GroES chaperonin family. In terms of assembly, heptamer of 7 subunits arranged in a ring. Interacts with the chaperonin GroEL.

The protein resides in the cytoplasm. Functionally, together with the chaperonin GroEL, plays an essential role in assisting protein folding. The GroEL-GroES system forms a nano-cage that allows encapsulation of the non-native substrate proteins and provides a physical environment optimized to promote and accelerate protein folding. GroES binds to the apical surface of the GroEL ring, thereby capping the opening of the GroEL channel. The chain is Co-chaperonin GroES from Bacillus cereus (strain ATCC 14579 / DSM 31 / CCUG 7414 / JCM 2152 / NBRC 15305 / NCIMB 9373 / NCTC 2599 / NRRL B-3711).